Reading from the N-terminus, the 287-residue chain is Pyridoxal kinase PdxY (287 aa).

Substrate is bound by residues Ser9 and 44 to 45 (TQ). Residues Asp111, Ala143, Glu148, Lys181, and 208 to 211 (RPLV) contribute to the ATP site. Asp223 is a substrate binding site.

It belongs to the pyridoxine kinase family. PdxY subfamily. Homodimer. Mg(2+) is required as a cofactor.

It catalyses the reaction pyridoxal + ATP = pyridoxal 5'-phosphate + ADP + H(+). It functions in the pathway cofactor metabolism; pyridoxal 5'-phosphate salvage; pyridoxal 5'-phosphate from pyridoxal: step 1/1. Pyridoxal kinase involved in the salvage pathway of pyridoxal 5'-phosphate (PLP). Catalyzes the phosphorylation of pyridoxal to PLP. This Photorhabdus laumondii subsp. laumondii (strain DSM 15139 / CIP 105565 / TT01) (Photorhabdus luminescens subsp. laumondii) protein is Pyridoxal kinase PdxY.